The following is a 357-amino-acid chain: MFSCKQHLSLGACVFCLGLLASTPFIWCFVFANLLSLEIFSPWQTHVYRLGFPTACLMAVLWTLVPAKHAVRAVTPAIMLNIASALIFFSLRVYSTSTWVSAPCLFLANLPLLCLWPRLAIEIVYICPAIHQRFFELGLLLACTIFALSVVSRALEVSAVFMSPFFIFLALGSGSLAGARRNQIYTSGLERRRSIFCARGDHSVASLKETLHKCPWDLLAISALTVLVVCVMIVLHVHAEVFFGLSRYLPLFLCGAMASGGLYLGHSSIIACVMATLCTLSSVVVYFLHETLGPLGKTVLFISIFVYYFSGVAALSAAMRYKLKKFVNGPLVHLRVVYMCCFVFTFCEYLLVTFIKS.

Residues 1–11 (MFSCKQHLSLG) are Virion surface-facing. Residues 12–32 (ACVFCLGLLASTPFIWCFVFA) are membrane-embedded. Residues 33-46 (NLLSLEIFSPWQTH) are Intravirion-facing. Positions 47–67 (VYRLGFPTACLMAVLWTLVPA) form a transmembrane segment. At 68 to 70 (KHA) the chain is on the virion surface side. At 71–91 (VRAVTPAIMLNIASALIFFSL) the chain is embedded in the membrane. Topologically, residues 92 to 98 (RVYSTST) are intravirion. The chain crosses the lipid bilayer at residues 99–121 (WVSAPCLFLANLPLLCLWPRLAI). Residues 122 to 133 (EIVYICPAIHQR) are Virion surface-facing. The hydrophobic stretch at 134 to 154 (FFELGLLLACTIFALSVVSRA) threads the membrane. Over 155 to 158 (LEVS) the chain is Intravirion. The segment at 159–179 (AVFMSPFFIFLALGSGSLAGA) is a transmembrane helix. The Virion surface portion of the chain corresponds to 180–217 (RRNQIYTSGLERRRSIFCARGDHSVASLKETLHKCPWD). The Integrin binding site motif lies at 199–201 (RGD). A membrane pass occupies residues 218 to 238 (LLAISALTVLVVCVMIVLHVH). The Intravirion segment spans residues 239–240 (AE). The chain crosses the lipid bilayer at residues 241-261 (VFFGLSRYLPLFLCGAMASGG). The Virion surface portion of the chain corresponds to 262–267 (LYLGHS). Positions 268–288 (SIIACVMATLCTLSSVVVYFL) form a transmembrane segment. Residues 289-298 (HETLGPLGKT) lie on the Intravirion side of the membrane. Over 299 to 319 (VLFISIFVYYFSGVAALSAAM) the chain traverses the membrane. Over 320–335 (RYKLKKFVNGPLVHLR) the chain is Virion surface. The chain crosses the lipid bilayer at residues 336–356 (VVYMCCFVFTFCEYLLVTFIK). Residue Ser357 is a topological domain, intravirion.

It belongs to the herpesviridae BMRF2 family. As to quaternary structure, interacts with BDLF2. Interacts with host beta1 integrin family. Post-translationally, extensively glycosylated by O-linked oligosaccharides.

It is found in the virion membrane. Its subcellular location is the host cell membrane. Facilitates virus attachment to oral epithelial cells by binding to host beta1 integrin family. Participates in rearrangement of cellular actin to increase intercellular contacts by binding BDLF2 and thereby promote virus cell-to-cell spreading. The polypeptide is Protein BMRF2 (Homo sapiens (Human)).